The chain runs to 344 residues: F17a-G fimbrial adhesin (344 aa).

The first 22 residues, 1-22 (MTNFYKVFLAVFILVCCNISQA), serve as a signal peptide directing secretion. Positions 23–199 (AVSFIGSTEN…SLNPFTLNDT (177 aa)) are receptor-binding lectin domain. A carbohydrate-binding positions include 65–66 (AN), 110–111 (DT), and 139–142 (STQG). A disulfide bridge connects residues Cys-75 and Cys-132. Positions 200–344 (VTSCRLLTPS…GISTFTFSYQ (145 aa)) are fimbrillin-binding domain. Residues 288–308 (LKFGPDSPVKGNENQWQLSTG) form a disordered region. Positions 299–308 (NENQWQLSTG) are enriched in polar residues.

The protein belongs to the fimbrial protein family.

The protein localises to the fimbrium. Functionally, essential fimbrial adhesion factor that mediates binding to N-acetylglucosamine-containing receptors in the host intestinal microvilli, leading to colonization of the intestinal tissue, and diarrhea or septicemia. Also confers adhesiveness to laminin and basement membranes. This chain is F17a-G fimbrial adhesin (f17aG), found in Escherichia coli.